Consider the following 373-residue polypeptide: 3 beta-hydroxysteroid dehydrogenase/Delta 5--&gt;4-isomerase (373 aa).

The active-site Proton acceptor is the Tyr155. Position 159 (Lys159) interacts with NAD(+). Residues 288–308 (ISLQYWLAFLLEIVSFLLSPI) form a helical membrane-spanning segment.

The protein belongs to the 3-beta-HSD family.

It localises to the endoplasmic reticulum membrane. It is found in the mitochondrion membrane. The enzyme catalyses a 3beta-hydroxy-Delta(5)-steroid + NAD(+) = a 3-oxo-Delta(5)-steroid + NADH + H(+). The catalysed reaction is a 3-oxo-Delta(5)-steroid = a 3-oxo-Delta(4)-steroid. It participates in lipid metabolism; steroid biosynthesis. 3-beta-HSD is a bifunctional enzyme, that catalyzes the oxidative conversion of Delta(5)-ene-3-beta-hydroxy steroid, and the oxidative conversion of ketosteroids. The 3-beta-HSD enzymatic system plays a crucial role in the biosynthesis of all classes of hormonal steroids. The sequence is that of 3 beta-hydroxysteroid dehydrogenase/Delta 5--&gt;4-isomerase (HSD3B) from Bos taurus (Bovine).